Here is a 401-residue protein sequence, read N- to C-terminus: Tyrosine--tRNA ligase (401 aa).

The short motif at 42 to 51 (PTAPDLHLGH) is the 'HIGH' region element. Residues 226–230 (KMSKS) carry the 'KMSKS' region motif. An ATP-binding site is contributed by K229. An S4 RNA-binding domain is found at 336-397 (IALAQLLKQI…GKRRIAKLSI (62 aa)).

The protein belongs to the class-I aminoacyl-tRNA synthetase family. TyrS type 2 subfamily. Homodimer.

The protein resides in the cytoplasm. It catalyses the reaction tRNA(Tyr) + L-tyrosine + ATP = L-tyrosyl-tRNA(Tyr) + AMP + diphosphate + H(+). Functionally, catalyzes the attachment of tyrosine to tRNA(Tyr) in a two-step reaction: tyrosine is first activated by ATP to form Tyr-AMP and then transferred to the acceptor end of tRNA(Tyr). In Legionella pneumophila (strain Paris), this protein is Tyrosine--tRNA ligase.